A 445-amino-acid chain; its full sequence is Arginine/agmatine antiporter (445 aa).

Residues 1–12 are Cytoplasmic-facing; that stretch reads MSSDADAHKVGL. The chain crosses the membrane as a helical span at residues 13 to 24; sequence IPVTLMVSGNIM. L-arginine-binding residues include isoleucine 23, serine 26, and glycine 27. A Helix-breaking GSG motif TM1 motif is present at residues 25 to 27; sequence GSG. Residues 25 to 42 lie on the Periplasmic side of the membrane; it reads GSGVFLLPANLASTGGIA. The chain crosses the membrane as a helical span at residues 43-61; it reads IYGWLVTIIGALGLSMVYA. Topologically, residues 62-86 are cytoplasmic; it reads KMSFLDPSPGGSYAYARRCFGPFLG. Residues 87–112 traverse the membrane as a helical segment; that stretch reads YQTNVLYWLACWIGNIAMVVIGVGYL. L-arginine contacts are provided by alanine 96, cysteine 97, and asparagine 101. At 113–124 the chain is on the periplasmic side; it reads SYFFPILKDPLV. Residues 125–142 form a helical membrane-spanning segment; the sequence is LTITCVVVLWIFVLLNIV. Glycine 143 is a topological domain (cytoplasmic). Residues 144-171 form a helical membrane-spanning segment; that stretch reads PKMITRVQAVATVLALIPIVGIAVFGWF. Residues 172–194 lie on the Periplasmic side of the membrane; sequence WFRGETYMAAWNVSGLGTFGAIQ. The helical transmembrane segment at 195–207 threads the bilayer; it reads STLNVTLWSFIGV. L-arginine is bound by residues tryptophan 202 and isoleucine 205. Positions 206–210 match the Helix-breaking GVESA motif TM6 motif; it reads GVESA. Residues 208–226 lie on the Cytoplasmic side of the membrane; that stretch reads ESASVAAGVVKNPKRNVPI. Residues 227–247 traverse the membrane as a helical segment; that stretch reads ATIGGVLIAAVCYVLSTTAIM. Topologically, residues 248–277 are periplasmic; sequence GMIPNAALRVSASPFGDAARMALGDTAGAI. The helical transmembrane segment at 278-301 threads the bilayer; that stretch reads VSFCAAAGCLGSLGGWTLLAGQTA. Residue tryptophan 293 coordinates L-arginine. Residues 302–323 lie on the Cytoplasmic side of the membrane; the sequence is KAAADDGLFPPIFARVNKAGTP. The helical transmembrane segment at 324-340 threads the bilayer; the sequence is VAGLIIVGILMTIFQLS. Residues 341–352 lie on the Periplasmic side of the membrane; that stretch reads SISPNATKEFGL. Residues 353 to 370 traverse the membrane as a helical segment; sequence VSSVSVIFTLVPYLYTCA. Serine 357 lines the L-arginine pocket. Residues 371-388 lie on the Cytoplasmic side of the membrane; the sequence is ALLLLGHGHFGKARPAYL. Residues 389–404 form a helical membrane-spanning segment; that stretch reads AVTTIAFLYCIWAVVG. At 405–407 the chain is on the periplasmic side; sequence SGA. Residues 408 to 426 traverse the membrane as a helical segment; the sequence is KEVMWSFVTLMVITAMYAL. Residues 427–445 lie on the Cytoplasmic side of the membrane; that stretch reads NYNRLHKNPYPLDAPISKD.

Belongs to the amino acid-polyamine-organocation (APC) superfamily. Basic amino acid/polyamine antiporter (APA) (TC 2.A.3.2) family. As to quaternary structure, homodimer;each subunit has its own individual transport capacity.

The protein resides in the cell inner membrane. It catalyses the reaction agmatine(in) + L-arginine(out) = agmatine(out) + L-arginine(in). Its function is as follows. Major component of the acid-resistance (AR) system allowing enteric pathogens to survive the acidic environment in the stomach. Exchanges extracellular arginine for its intracellular decarboxylation product agmatine (Agm) thereby expelling intracellular protons. Probably undergoes several conformational states in order to translocate the substrate across the membrane; keeps the substrate accessible to only 1 side of the membrane at a time by opening and closing 3 membrane-internal gates. This is Arginine/agmatine antiporter (adiC) from Escherichia coli O157:H7.